The sequence spans 126 residues: Transcription antitermination protein NusB (126 aa).

The protein belongs to the NusB family.

In terms of biological role, involved in transcription antitermination. Required for transcription of ribosomal RNA (rRNA) genes. Binds specifically to the boxA antiterminator sequence of the ribosomal RNA (rrn) operons. This chain is Transcription antitermination protein NusB, found in Oceanobacillus iheyensis (strain DSM 14371 / CIP 107618 / JCM 11309 / KCTC 3954 / HTE831).